Here is a 242-residue protein sequence, read N- to C-terminus: UPF0246 protein SPD_1378 (242 aa).

The protein belongs to the UPF0246 family.

This chain is UPF0246 protein SPD_1378, found in Streptococcus pneumoniae serotype 2 (strain D39 / NCTC 7466).